Consider the following 597-residue polypeptide: Tubulin polyglutamylase ttll-4 (597 aa).

Polar residues predominate over residues 1–18 (MSSGYSSAPSVSHTSSEA). 2 disordered regions span residues 1–39 (MSSG…DEQR) and 80–107 (SKSK…FLKS). Residues 26–35 (YEDGVDEEAS) are compositionally biased toward acidic residues. A TTL domain is found at 134-472 (QSRLTWCHNS…HVPPSFDKLH (339 aa)). ATP is bound by residues Lys-250, 256–257 (RG), 278–281 (QHYI), and 291–293 (KFD). Arg-256 is a binding site for a protein. Arg-317 is a binding site for L-glutamate. Residue 338–339 (TN) participates in ATP binding. L-glutamate contacts are provided by Tyr-340, Ser-341, and Lys-358. Mg(2+) contacts are provided by Asp-418, Glu-431, and Asn-433. L-glutamate is bound at residue Lys-449.

This sequence belongs to the tubulin--tyrosine ligase family. It depends on Mg(2+) as a cofactor.

The enzyme catalyses L-glutamyl-[protein] + L-glutamate + ATP = gamma-L-glutamyl-L-glutamyl-[protein] + ADP + phosphate + H(+). Monoglutamylase which modifies tubulin, adding a single glutamate on the gamma-carboxyl group of specific glutamate residues of target proteins. Involved in the side-chain initiation step of the polyglutamylation reaction but not in the elongation step. Preferentially modifies beta-tail tubulin over the alpha-tubulin. Involved in side-chain glutamylation of tubulin in sensory cilia. Together with ttll-5 and ttll-11, required for male mating. The protein is Tubulin polyglutamylase ttll-4 (ttll-4) of Caenorhabditis briggsae.